The chain runs to 475 residues: Aspartyl/glutamyl-tRNA(Asn/Gln) amidotransferase subunit B (475 aa).

The protein belongs to the GatB/GatE family. GatB subfamily. In terms of assembly, heterotrimer of A, B and C subunits.

The enzyme catalyses L-glutamyl-tRNA(Gln) + L-glutamine + ATP + H2O = L-glutaminyl-tRNA(Gln) + L-glutamate + ADP + phosphate + H(+). The catalysed reaction is L-aspartyl-tRNA(Asn) + L-glutamine + ATP + H2O = L-asparaginyl-tRNA(Asn) + L-glutamate + ADP + phosphate + 2 H(+). In terms of biological role, allows the formation of correctly charged Asn-tRNA(Asn) or Gln-tRNA(Gln) through the transamidation of misacylated Asp-tRNA(Asn) or Glu-tRNA(Gln) in organisms which lack either or both of asparaginyl-tRNA or glutaminyl-tRNA synthetases. The reaction takes place in the presence of glutamine and ATP through an activated phospho-Asp-tRNA(Asn) or phospho-Glu-tRNA(Gln). The polypeptide is Aspartyl/glutamyl-tRNA(Asn/Gln) amidotransferase subunit B (Caldanaerobacter subterraneus subsp. tengcongensis (strain DSM 15242 / JCM 11007 / NBRC 100824 / MB4) (Thermoanaerobacter tengcongensis)).